The chain runs to 143 residues: MGKPSGLRCARKLXNRRRDQKWHDXXYKKSHLGTALKANPFGGASHAKGIVLEKIGVEAKQPNSAIRKCVRVQLIKNGKKITAFVPNDGCLNYIEENDEVLVAGFGRSGHAVGDIPGVRFKIVKVANVSLHALFTGKKERPRS.

Position 62 is a hydroxyproline (Pro62).

Belongs to the universal ribosomal protein uS12 family. As to quaternary structure, component of the 40S small ribosomal subunit.

Its subcellular location is the cytoplasm. The protein resides in the cytosol. It localises to the rough endoplasmic reticulum. The polypeptide is Small ribosomal subunit protein uS12 (RPS23) (Ciona intestinalis (Transparent sea squirt)).